The chain runs to 646 residues: Hypoxia up-regulated protein 1 (646 aa).

The first 22 residues, 1 to 22, serve as a signal peptide directing secretion; the sequence is MRPLVCVLWMFLFALLSSHTES. The disordered stretch occupies residues 572–646; that stretch reads LFGGGSSVSE…KEEEKAEPQE (75 aa). Acidic residues predominate over residues 590–610; the sequence is VQEEDEVPTEPTKEEEQESAD. Basic and acidic residues predominate over residues 611–646; the sequence is PADKQQDKENNKEKGTSATNEKEEGKKEEEKAEPQE.

It belongs to the heat shock protein 70 family.

The protein localises to the endoplasmic reticulum lumen. Its function is as follows. Has a pivotal role in cytoprotective cellular mechanisms triggered by oxygen deprivation. May play a role as a molecular chaperone and participate in protein folding. This is Hypoxia up-regulated protein 1 (hyou1) from Xenopus laevis (African clawed frog).